Consider the following 1778-residue polypeptide: Internalin I (1778 aa).

The N-terminal stretch at 1–28 (MKKKFSIVIISVLLLGYLAPFDTLLVGA) is a signal peptide. The tract at residues 36–101 (DTAVKTAEAD…NIKTEINTDK (66 aa)) is disordered. Acidic residues predominate over residues 51 to 62 (IESETGSDDETA). The span at 63 to 88 (EEPKEAKEAEASKETTEKEEKAKTEE) shows a compositional bias: basic and acidic residues. LRR repeat units follow at residues 155–179 (AISQLDLSGETGNDPTDISNIEGLQ), 183–204 (NLTSLNLSENNISDLAPLKDLV), 205–227 (NLVSLNLSSNRTLVNLSGVEDLV), 228–250 (NLQELNVSANKALEDISQVASLP), 251–272 (VLKEISAQGCNIKTLELKNPAG), 277–298 (ELETFYLQENDLTNLTSLAKLP), 299–321 (KLKNLYIKGNASLKSLETLNGAT), 322–344 (KLQLIDASNCTDLETLGDISGLS), 345–367 (ELEMIQLSGCSKLKEITSLKNLP), 368–389 (NLVNITADSCAIEDLGTLNNLP), 390–412 (KLQTLVLSDNENLTNITAITDLP), 413–434 (QLKTLTLDGCGITSIGTLDNLP), 435–456 (KLEKLDLKENQITSISEITDLP), 457–478 (RLSYLDVSVNNLTTIGDLKKLP), 479–500 (LLEWLNVSSNRLSDVSTLTNFP), 501–522 (SLNYINISNNVIRTVGKMTELP), 523–544 (SLKEFYAQNNSISDISMIHDMP), 545–566 (NLRKVDASNNLITNIGTFDNLP), 567–588 (KLQSLDVHSNRITSTSVIHDLP), 589–610 (SLETFNAQTNLITNIGTMDNLP), 611–632 (DLTYVNLSFNRIPSLAPIGDLP), 633–653 (NLETLIVSDNNSYLRSLGTMD), 657–678 (KLRILDLQNNYLNYTGTEGNLS), 685–707 (NLTELNLRNNVYIDDISGLSTLS), 708–729 (RLIYLNLDSNKIEDISALSNLT), 730–751 (NLQELTLENNKIENISALSDLE), and 752–773 (NLNKLVVSKNKIIDISPVANMV). An LRRCT domain is found at 785–872 (TYTLPTVLSY…SAAKVTADAE (88 aa)). 3 consecutive MucBP domains span residues 1510-1569 (DAAA…EQTV), 1575-1634 (AIKP…PQTI), and 1644-1705 (SKKS…SQTV). The tract at residues 1716–1742 (SKDDPKVKGKTNQPSSTDTKLKVDNNS) is disordered. Polar residues predominate over residues 1725-1742 (KTNQPSSTDTKLKVDNNS). The short motif at 1743–1747 (LPATG) is the LPXTG sorting signal element. Thr-1746 carries the post-translational modification Pentaglycyl murein peptidoglycan amidated threonine. Positions 1747–1778 (GDTENMILAVLIGFNMLIVASIFLFRKPKTNQ) are cleaved as a propeptide — removed by sortase.

It belongs to the internalin family.

The protein localises to the secreted. Its subcellular location is the cell wall. A role in virulence could not be demonstrated. This is Internalin I (inlI) from Listeria monocytogenes serovar 1/2a (strain ATCC BAA-679 / EGD-e).